Here is a 253-residue protein sequence, read N- to C-terminus: Triosephosphate isomerase, cytosolic (253 aa).

Substrate contacts are provided by N10 and K12. Catalysis depends on H96, which acts as the Electrophile. Catalysis depends on E166, which acts as the Proton acceptor.

It belongs to the triosephosphate isomerase family. Homodimer.

Its subcellular location is the cytoplasm. It catalyses the reaction D-glyceraldehyde 3-phosphate = dihydroxyacetone phosphate. It participates in carbohydrate biosynthesis; gluconeogenesis. The protein operates within carbohydrate degradation; glycolysis; D-glyceraldehyde 3-phosphate from glycerone phosphate: step 1/1. This is Triosephosphate isomerase, cytosolic from Zea mays (Maize).